Reading from the N-terminus, the 357-residue chain is Aminomethyltransferase (357 aa).

It belongs to the GcvT family. In terms of assembly, the glycine cleavage system is composed of four proteins: P, T, L and H.

The catalysed reaction is N(6)-[(R)-S(8)-aminomethyldihydrolipoyl]-L-lysyl-[protein] + (6S)-5,6,7,8-tetrahydrofolate = N(6)-[(R)-dihydrolipoyl]-L-lysyl-[protein] + (6R)-5,10-methylene-5,6,7,8-tetrahydrofolate + NH4(+). The glycine cleavage system catalyzes the degradation of glycine. In Halothermothrix orenii (strain H 168 / OCM 544 / DSM 9562), this protein is Aminomethyltransferase.